A 176-amino-acid chain; its full sequence is Interleukin-1 receptor antagonist protein (176 aa).

The first 25 residues, 1 to 25 (METCRCPLSYLISFLLFLSHSETAC), serve as a signal peptide directing secretion. A disulfide bridge links Cys-91 with Cys-141. Asn-109 carries an N-linked (GlcNAc...) asparagine glycan.

The protein belongs to the IL-1 family.

The protein localises to the secreted. In terms of biological role, anti-inflammatory antagonist of interleukin-1 family of proinflammatory cytokines such as interleukin-1beta/IL1B and interleukin-1alpha/IL1A. Protects from immune dysregulation and uncontrolled systemic inflammation triggered by IL1 for a range of innate stimulatory agents such as pathogens. This is Interleukin-1 receptor antagonist protein (IL1RN) from Canis lupus familiaris (Dog).